A 140-amino-acid chain; its full sequence is Nucleoside diphosphate kinase (140 aa).

Positions 11, 59, 87, 93, 104, and 114 each coordinate ATP. The active-site Pros-phosphohistidine intermediate is the His117.

It belongs to the NDK family. In terms of assembly, homotetramer. Requires Mg(2+) as cofactor.

The protein localises to the cytoplasm. It catalyses the reaction a 2'-deoxyribonucleoside 5'-diphosphate + ATP = a 2'-deoxyribonucleoside 5'-triphosphate + ADP. It carries out the reaction a ribonucleoside 5'-diphosphate + ATP = a ribonucleoside 5'-triphosphate + ADP. Functionally, major role in the synthesis of nucleoside triphosphates other than ATP. The ATP gamma phosphate is transferred to the NDP beta phosphate via a ping-pong mechanism, using a phosphorylated active-site intermediate. This is Nucleoside diphosphate kinase from Bradyrhizobium diazoefficiens (strain JCM 10833 / BCRC 13528 / IAM 13628 / NBRC 14792 / USDA 110).